A 348-amino-acid polypeptide reads, in one-letter code: Phenylalanine--tRNA ligase alpha subunit (348 aa).

Mg(2+) is bound at residue glutamate 268.

This sequence belongs to the class-II aminoacyl-tRNA synthetase family. Phe-tRNA synthetase alpha subunit type 1 subfamily. In terms of assembly, tetramer of two alpha and two beta subunits. Requires Mg(2+) as cofactor.

It is found in the cytoplasm. It catalyses the reaction tRNA(Phe) + L-phenylalanine + ATP = L-phenylalanyl-tRNA(Phe) + AMP + diphosphate + H(+). This is Phenylalanine--tRNA ligase alpha subunit from Bordetella bronchiseptica (strain ATCC BAA-588 / NCTC 13252 / RB50) (Alcaligenes bronchisepticus).